A 107-amino-acid chain; its full sequence is UPF0145 protein CKO_02237 (107 aa).

This sequence belongs to the UPF0145 family.

The protein is UPF0145 protein CKO_02237 of Citrobacter koseri (strain ATCC BAA-895 / CDC 4225-83 / SGSC4696).